Consider the following 203-residue polypeptide: Imidazoleglycerol-phosphate dehydratase (203 aa).

The tract at residues 184-203 (DPRRSSQIPSSKGVLEQAGQ) is disordered.

This sequence belongs to the imidazoleglycerol-phosphate dehydratase family.

The protein localises to the cytoplasm. The enzyme catalyses D-erythro-1-(imidazol-4-yl)glycerol 3-phosphate = 3-(imidazol-4-yl)-2-oxopropyl phosphate + H2O. Its pathway is amino-acid biosynthesis; L-histidine biosynthesis; L-histidine from 5-phospho-alpha-D-ribose 1-diphosphate: step 6/9. This Prochlorococcus marinus (strain NATL1A) protein is Imidazoleglycerol-phosphate dehydratase.